We begin with the raw amino-acid sequence, 203 residues long: GTP-binding protein yptV1 (203 aa).

GTP-binding positions include 15-23 (GDSGVGKSC), 33-40 (YTESYIST), 63-67 (DTAGQ), 121-124 (NKSD), and 151-153 (SAK). The Effector region motif lies at 37–45 (YISTIGVDF). Positions 173–203 (MASQPVPPKPGGPVVRPTEGKPINNKSSSCC) are disordered. Residues Cys202 and Cys203 are each lipidated (S-geranylgeranyl cysteine).

Belongs to the small GTPase superfamily. Rab family.

It localises to the cell membrane. Its function is as follows. Protein transport. Probably involved in vesicular traffic. The protein is GTP-binding protein yptV1 (YPTV1) of Volvox carteri (Green alga).